Here is a 359-residue protein sequence, read N- to C-terminus: Fructose-bisphosphate aldolase class 2 (359 aa).

Serine 62 lines the D-glyceraldehyde 3-phosphate pocket. Aspartate 110 acts as the Proton donor in catalysis. Zn(2+) is bound by residues histidine 111, aspartate 145, glutamate 175, and histidine 227. A dihydroxyacetone phosphate-binding site is contributed by glycine 228. Histidine 265 serves as a coordination point for Zn(2+). Dihydroxyacetone phosphate is bound by residues glycine 266–serine 268 and asparagine 287–threonine 290.

Belongs to the class II fructose-bisphosphate aldolase family. Zn(2+) is required as a cofactor.

The catalysed reaction is beta-D-fructose 1,6-bisphosphate = D-glyceraldehyde 3-phosphate + dihydroxyacetone phosphate. The protein operates within carbohydrate degradation; glycolysis; D-glyceraldehyde 3-phosphate and glycerone phosphate from D-glucose: step 4/4. Its function is as follows. Catalyzes the aldol condensation of dihydroxyacetone phosphate (DHAP or glycerone-phosphate) with glyceraldehyde 3-phosphate (G3P) to form fructose 1,6-bisphosphate (FBP) in gluconeogenesis and the reverse reaction in glycolysis. The sequence is that of Fructose-bisphosphate aldolase class 2 (fbaA) from Buchnera aphidicola subsp. Baizongia pistaciae (strain Bp).